The following is a 78-amino-acid chain: Large ribosomal subunit protein bL31 (78 aa).

Belongs to the bacterial ribosomal protein bL31 family. Type A subfamily. In terms of assembly, part of the 50S ribosomal subunit.

Binds the 23S rRNA. This Rickettsia prowazekii (strain Madrid E) protein is Large ribosomal subunit protein bL31.